A 279-amino-acid chain; its full sequence is Acetylglutamate kinase (279 aa).

Residues 62–63, Arg84, and Asn177 contribute to the substrate site; that span reads GG.

It belongs to the acetylglutamate kinase family. ArgB subfamily.

The protein localises to the cytoplasm. The catalysed reaction is N-acetyl-L-glutamate + ATP = N-acetyl-L-glutamyl 5-phosphate + ADP. The protein operates within amino-acid biosynthesis; L-arginine biosynthesis; N(2)-acetyl-L-ornithine from L-glutamate: step 2/4. Catalyzes the ATP-dependent phosphorylation of N-acetyl-L-glutamate. The polypeptide is Acetylglutamate kinase (Pseudothermotoga lettingae (strain ATCC BAA-301 / DSM 14385 / NBRC 107922 / TMO) (Thermotoga lettingae)).